We begin with the raw amino-acid sequence, 272 residues long: Tryptophan synthase alpha chain (272 aa).

Catalysis depends on proton acceptor residues E53 and D64.

This sequence belongs to the TrpA family. In terms of assembly, tetramer of two alpha and two beta chains.

It carries out the reaction (1S,2R)-1-C-(indol-3-yl)glycerol 3-phosphate + L-serine = D-glyceraldehyde 3-phosphate + L-tryptophan + H2O. Its pathway is amino-acid biosynthesis; L-tryptophan biosynthesis; L-tryptophan from chorismate: step 5/5. The alpha subunit is responsible for the aldol cleavage of indoleglycerol phosphate to indole and glyceraldehyde 3-phosphate. The polypeptide is Tryptophan synthase alpha chain (Xanthomonas campestris pv. campestris (strain B100)).